The primary structure comprises 303 residues: Cysteine synthase B (303 aa).

Lysine 41 carries the post-translational modification N6-(pyridoxal phosphate)lysine. Residues asparagine 71, 174-178, and serine 255 each bind pyridoxal 5'-phosphate; that span reads GTTGT.

It belongs to the cysteine synthase/cystathionine beta-synthase family. It depends on pyridoxal 5'-phosphate as a cofactor.

It catalyses the reaction O-acetyl-L-serine + hydrogen sulfide = L-cysteine + acetate. It participates in amino-acid biosynthesis; L-cysteine biosynthesis; L-cysteine from L-serine: step 2/2. Its function is as follows. Two cysteine synthase enzymes are found. Both catalyze the same reaction. Cysteine synthase B can also use thiosulfate in place of sulfide to give cysteine thiosulfonate as a product. The protein is Cysteine synthase B (cysM) of Salmonella typhimurium (strain LT2 / SGSC1412 / ATCC 700720).